Reading from the N-terminus, the 315-residue chain is Replication-associated protein VP4 (315 aa).

Catalysis depends on O-(5'-phospho-DNA)-tyrosine intermediate residues Tyr176 and Tyr180. Positions 253–315 form a coiled coil; it reads EYDAKVKLKS…FKQLQEKLKL (63 aa).

This sequence belongs to the microviridae Rep protein family.

The catalysed reaction is ATP + (deoxyribonucleotide)n-3'-hydroxyl + 5'-phospho-(deoxyribonucleotide)m = (deoxyribonucleotide)n+m + AMP + diphosphate.. Plays an essential role in viral DNA replication. Binds the origin of replication and cleaves the dsDNA replicative form I (RFI) and becomes covalently bound to it via phosphotyrosine bond, generating the dsDNA replicative form II (RFII). In turn, viral DNA replication initiates at the 3'-OH of the cleavage site. After one round of rolling circle synthesis, protein VP4 is linked to the newly synthesized ssDNA and joins the ends of the displaced strand to generate a circular single-stranded molecule ready to be packed into a virion. The polypeptide is Replication-associated protein VP4 (Bdellovibrio bacteriovorus (Bacteriophage phiMH2K)).